An 889-amino-acid chain; its full sequence is MSISETPHNKSQGLQKAAGRPKIVVPEGSPSRNSDSGSFTIEGDTSLNDDLLSISGSVTPRARRSSRLSLDSITPRRSFDSRTLSVANSRSFGFENETHSGSMDFSPLGNNSIYEIVMNTRRKNWLNYPTVADIPQVSLSKNDLDDHWKTHVIEYVKNIKSDYQIFQSTNNIRNMNQMEQLKELREGENMHEESFEANLRQGDAELINSIPDFYFSDKFQLDNPRTFHKVLDAIDLFLTKLDMKRQAERDEAFSELRDRLNDFLDIVETLLVTEISKSSHKFFHALSEVDNIQKRALDTMSELKELAQNIKTIDAENIRKKISHLEMIFKRKNVEKLEQGLLQAKLVLNKTDECKSMYEENKLDNCLELIKSIDYLIKGDDSINEDVQSWTRCWPYKLSNLRTIPALSATREFLTNMKIEIGGKFSLQLSILLIDDLRSFCKSIKPKETLHRIQTGSNDKKQTIFTDNFSSKITELIVRLNRCEELTSAFDLYREKSITELKSIIKIYLPTENAHADNNHDEKHLNNGSTSGSKLSRLIKEQTPAEFQSMLVNIFTHALEALRRLYGHQKLLLDISLNELASVKSPNENQHNMITQLDIRTGINEIIRIIQLRTGKIIAVRRELNLSLRYDYFLKFYAICVIFIQECEVLSGEFLTKYLSNVLASQIKHYANAQSSKNYRNIKKKIDAEEWIPYIVDSSIQSDVNDIVSSIDIDPLSWTTILDMVGGSHDCENGRSEDKEKDEGNETYQGHRKSVVVGDKTFVASSSLLATIEVIKELMVLSINLPSIYLSNFEKLCYDALQYYNSSAMASVTQPGNSLLKTGRNLSIMGESLDCLAEFVIIVQRFYQRLSNSNRDFEPFDASHYTTLLGQFQASSNKIYMANAPPPPV.

Composition is skewed to polar residues over residues 1 to 14 and 30 to 44; these read MSIS…SQGL and PSRN…IEGD. The tract at residues 1 to 44 is disordered; that stretch reads MSISETPHNKSQGLQKAAGRPKIVVPEGSPSRNSDSGSFTIEGD. Residues Ser69 and Ser72 each carry the phosphoserine modification. Thr74 carries the post-translational modification Phosphothreonine. A coiled-coil region spans residues 286 to 321; it reads LSEVDNIQKRALDTMSELKELAQNIKTIDAENIRKK. Basic and acidic residues predominate over residues 729-744; that stretch reads HDCENGRSEDKEKDEG. Residues 729 to 748 are disordered; sequence HDCENGRSEDKEKDEGNETY.

The protein belongs to the VPS54 family. In terms of assembly, component of the Golgi-associated retrograde protein (GARP) complex, also called VFT (VPS fifty-three) complex, composed of VPS51, VPS52, VPS53 and VPS54. Also interacts with YPT6, TLG1, RBL2, SEC10, SEC15, EXO84 and ARL1.

Its subcellular location is the golgi apparatus. It localises to the trans-Golgi network membrane. It is found in the endosome membrane. The protein localises to the mitochondrion membrane. Functionally, involved in retrograde transport from early and late endosomes to late Golgi by linking the vesicle through the t-SNARE TGL1 to the Golgi, leading to the membrane fusion between late Golgi and endosomal vesicles. Also seems to be involved in protein transport from Golgi to the plasma membrane and is required for the integrity of the actin cytoskeleton. This is Vacuolar protein sorting-associated protein 54 (VPS54) from Saccharomyces cerevisiae (strain ATCC 204508 / S288c) (Baker's yeast).